The primary structure comprises 114 residues: Adapter SH3BGRL (114 aa).

The tract at residues 13-50 (STAIKKKQQDVLGFLEANKIGFEEKDIAANEENRKWMR) is required for interaction with HER2. Positions 54 to 71 (PENSRPATGYPLPPQIFN) are required for interaction with PFN1, HER2, and ATG12. The short motif at 61-67 (TGYPLPP) is the SH3-binding element.

This sequence belongs to the SH3BGR family. As to quaternary structure, monomer. Interacts with PFN1/Profilin-1. Interacts with ERBB2. Interacts with ATG12. Interacts with BECN1. Interacts with translating ribosomes. Ubiquitous.

It is found in the cytoplasm. It localises to the cytosol. Its subcellular location is the cell membrane. Appears to function as an adapter protein that bridges proteins together or proteins with mRNAs. May function as a ubiquitin ligase-substrate adapter. Additionally, associates with translating cytoplasmic ribosomes and may promote the expression of specific mRNAs. The polypeptide is Adapter SH3BGRL (Homo sapiens (Human)).